Reading from the N-terminus, the 20-residue chain is Protein PR-L2 (20 aa).

The disordered stretch occupies residues 1 to 20; it reads SVFAFENEQSSTIAPARLYK.

The protein belongs to the BetVI family.

The sequence is that of Protein PR-L2 from Lupinus luteus (European yellow lupine).